We begin with the raw amino-acid sequence, 508 residues long: UDP-N-acetylmuramyl-tripeptide synthetase (508 aa).

Ser35 is a UDP-N-acetyl-alpha-D-muramoyl-L-alanyl-D-glutamate binding site. 118 to 124 (GTDGKSS) contacts ATP. Residues 163-164 (ST), Thr190, and Arg200 each bind UDP-N-acetyl-alpha-D-muramoyl-L-alanyl-D-glutamate. N6-carboxylysine is present on Lys232.

Belongs to the MurCDEF family. MurE subfamily. Post-translationally, carboxylation is probably crucial for Mg(2+) binding and, consequently, for the gamma-phosphate positioning of ATP.

It localises to the cytoplasm. It participates in cell wall biogenesis; peptidoglycan biosynthesis. Functionally, catalyzes the addition of an amino acid to the nucleotide precursor UDP-N-acetylmuramoyl-L-alanyl-D-glutamate (UMAG) in the biosynthesis of bacterial cell-wall peptidoglycan. The sequence is that of UDP-N-acetylmuramyl-tripeptide synthetase from Borrelia garinii subsp. bavariensis (strain ATCC BAA-2496 / DSM 23469 / PBi) (Borreliella bavariensis).